Reading from the N-terminus, the 116-residue chain is Large ribosomal subunit protein uL18 (116 aa).

This sequence belongs to the universal ribosomal protein uL18 family. In terms of assembly, part of the 50S ribosomal subunit; part of the 5S rRNA/L5/L18/L25 subcomplex. Contacts the 5S and 23S rRNAs.

In terms of biological role, this is one of the proteins that bind and probably mediate the attachment of the 5S RNA into the large ribosomal subunit, where it forms part of the central protuberance. In Shewanella oneidensis (strain ATCC 700550 / JCM 31522 / CIP 106686 / LMG 19005 / NCIMB 14063 / MR-1), this protein is Large ribosomal subunit protein uL18.